A 693-amino-acid chain; its full sequence is Elongation factor G (693 aa).

Residues 8–283 (NRIRNIGIAA…AVIDYLPAPT (276 aa)) form the tr-type G domain. Residues 17–24 (AHIDAGKT), 81–85 (DTPGH), and 135–138 (NKMD) contribute to the GTP site.

This sequence belongs to the TRAFAC class translation factor GTPase superfamily. Classic translation factor GTPase family. EF-G/EF-2 subfamily.

The protein resides in the cytoplasm. Catalyzes the GTP-dependent ribosomal translocation step during translation elongation. During this step, the ribosome changes from the pre-translocational (PRE) to the post-translocational (POST) state as the newly formed A-site-bound peptidyl-tRNA and P-site-bound deacylated tRNA move to the P and E sites, respectively. Catalyzes the coordinated movement of the two tRNA molecules, the mRNA and conformational changes in the ribosome. The sequence is that of Elongation factor G from Wolinella succinogenes (strain ATCC 29543 / DSM 1740 / CCUG 13145 / JCM 31913 / LMG 7466 / NCTC 11488 / FDC 602W) (Vibrio succinogenes).